The following is a 134-amino-acid chain: Large ribosomal subunit protein uL22 (134 aa).

It belongs to the universal ribosomal protein uL22 family. As to quaternary structure, part of the 50S ribosomal subunit.

In terms of biological role, this protein binds specifically to 23S rRNA; its binding is stimulated by other ribosomal proteins, e.g. L4, L17, and L20. It is important during the early stages of 50S assembly. It makes multiple contacts with different domains of the 23S rRNA in the assembled 50S subunit and ribosome. Functionally, the globular domain of the protein is located near the polypeptide exit tunnel on the outside of the subunit, while an extended beta-hairpin is found that lines the wall of the exit tunnel in the center of the 70S ribosome. The chain is Large ribosomal subunit protein uL22 from Karelsulcia muelleri (strain GWSS) (Sulcia muelleri).